Reading from the N-terminus, the 376-residue chain is Branched-chain-amino-acid aminotransferase, cytosolic (376 aa).

The residue at position 202 (K202) is an N6-(pyridoxal phosphate)lysine.

This sequence belongs to the class-IV pyridoxal-phosphate-dependent aminotransferase family. It depends on pyridoxal 5'-phosphate as a cofactor.

The protein resides in the cytoplasm. The catalysed reaction is L-leucine + 2-oxoglutarate = 4-methyl-2-oxopentanoate + L-glutamate. The enzyme catalyses L-isoleucine + 2-oxoglutarate = (S)-3-methyl-2-oxopentanoate + L-glutamate. It catalyses the reaction L-valine + 2-oxoglutarate = 3-methyl-2-oxobutanoate + L-glutamate. It carries out the reaction a 2-oxocarboxylate + L-methionine = 4-methylsulfanyl-2-oxobutanoate + an L-alpha-amino acid. Its pathway is amino-acid biosynthesis; L-isoleucine biosynthesis; L-isoleucine from 2-oxobutanoate: step 4/4. The protein operates within amino-acid biosynthesis; L-leucine biosynthesis; L-leucine from 3-methyl-2-oxobutanoate: step 4/4. It functions in the pathway amino-acid biosynthesis; L-valine biosynthesis; L-valine from pyruvate: step 4/4. It participates in amino-acid biosynthesis; L-methionine biosynthesis via salvage pathway; L-methionine from S-methyl-5-thio-alpha-D-ribose 1-phosphate: step 6/6. Functionally, cytoplasmic isozyme of branched-chain-amino-acid aminotransferase, which catalyzes the first reaction in the catabolism of the essential branched chain amino acids (BCAAs) leucine, isoleucine, and valine. Catalyzes the formation of methionine from 2-keto-4-methylthiobutyrate (KMTB) in the methionine salvage pathway primarily using BCAAs (leucine, isoleucine, and valine) as well as lysine and proline as the amino donors. Involved in cell cycle regulation. The protein is Branched-chain-amino-acid aminotransferase, cytosolic of Saccharomyces cerevisiae (strain ATCC 204508 / S288c) (Baker's yeast).